A 443-amino-acid chain; its full sequence is Methylenetetrahydrofolate--tRNA-(uracil-5-)-methyltransferase TrmFO (443 aa).

8 to 13 contacts FAD; that stretch reads GAGLAG.

It belongs to the MnmG family. TrmFO subfamily. FAD is required as a cofactor.

It localises to the cytoplasm. It catalyses the reaction uridine(54) in tRNA + (6R)-5,10-methylene-5,6,7,8-tetrahydrofolate + NADH + H(+) = 5-methyluridine(54) in tRNA + (6S)-5,6,7,8-tetrahydrofolate + NAD(+). It carries out the reaction uridine(54) in tRNA + (6R)-5,10-methylene-5,6,7,8-tetrahydrofolate + NADPH + H(+) = 5-methyluridine(54) in tRNA + (6S)-5,6,7,8-tetrahydrofolate + NADP(+). Catalyzes the folate-dependent formation of 5-methyl-uridine at position 54 (M-5-U54) in all tRNAs. The chain is Methylenetetrahydrofolate--tRNA-(uracil-5-)-methyltransferase TrmFO from Thermus thermophilus (strain ATCC BAA-163 / DSM 7039 / HB27).